Reading from the N-terminus, the 452-residue chain is LIM/homeobox protein lim-7 (452 aa).

2 LIM zinc-binding domains span residues 54–116 (AVCA…LFTT) and 117–179 (RCSR…LDNP). Residues 184-268 (SVPDYSKLNN…KKKDKQATRV (85 aa)) are disordered. 2 stretches are compositionally biased toward low complexity: residues 192-205 (NNNNNNDNNNSSSN) and 217-227 (TLTSLDNNTSS). The segment at residues 265-324 (ATRVRTVLNENQLKILRDCYSINSRPDATLKERLVEMTGLSARVIRVWFQNKRCKDKKRQ) is a DNA-binding region (homeobox). Positions 347 to 376 (GIGPLMVQPATPHIDNTLGGPIDIQHFAQW) are LIM interaction domain (LID).

Interacts (via LID domain) with ceh-14 (via LIM zinc-binding domains 1 and 2). As to expression, expressed in gonadal sheath cells, URA motoneurons, and 10 additional cells near the isthmus and terminal bulb of the pharynx. Expressed in the ALA and BDU cells.

The protein localises to the nucleus. In terms of biological role, probable DNA-binding transcriptional activator. The chain is LIM/homeobox protein lim-7 from Caenorhabditis elegans.